Reading from the N-terminus, the 427-residue chain is Enolase (427 aa).

A (2R)-2-phosphoglycerate-binding site is contributed by Q163. Residue E205 is the Proton donor of the active site. The Mg(2+) site is built by D242, E285, and D312. (2R)-2-phosphoglycerate contacts are provided by K337, R366, S367, and K388. K337 acts as the Proton acceptor in catalysis.

The protein belongs to the enolase family. Requires Mg(2+) as cofactor.

It localises to the cytoplasm. The protein localises to the secreted. The protein resides in the cell surface. The enzyme catalyses (2R)-2-phosphoglycerate = phosphoenolpyruvate + H2O. Its pathway is carbohydrate degradation; glycolysis; pyruvate from D-glyceraldehyde 3-phosphate: step 4/5. In terms of biological role, catalyzes the reversible conversion of 2-phosphoglycerate (2-PG) into phosphoenolpyruvate (PEP). It is essential for the degradation of carbohydrates via glycolysis. This is Enolase from Beijerinckia indica subsp. indica (strain ATCC 9039 / DSM 1715 / NCIMB 8712).